A 251-amino-acid chain; its full sequence is Ubiquinone/menaquinone biosynthesis C-methyltransferase UbiE (251 aa).

S-adenosyl-L-methionine is bound by residues Thr-74, Asp-95, and 123-124; that span reads DA.

The protein belongs to the class I-like SAM-binding methyltransferase superfamily. MenG/UbiE family.

It carries out the reaction a 2-demethylmenaquinol + S-adenosyl-L-methionine = a menaquinol + S-adenosyl-L-homocysteine + H(+). The enzyme catalyses a 2-methoxy-6-(all-trans-polyprenyl)benzene-1,4-diol + S-adenosyl-L-methionine = a 5-methoxy-2-methyl-3-(all-trans-polyprenyl)benzene-1,4-diol + S-adenosyl-L-homocysteine + H(+). The protein operates within quinol/quinone metabolism; menaquinone biosynthesis; menaquinol from 1,4-dihydroxy-2-naphthoate: step 2/2. It participates in cofactor biosynthesis; ubiquinone biosynthesis. In terms of biological role, methyltransferase required for the conversion of demethylmenaquinol (DMKH2) to menaquinol (MKH2) and the conversion of 2-polyprenyl-6-methoxy-1,4-benzoquinol (DDMQH2) to 2-polyprenyl-3-methyl-6-methoxy-1,4-benzoquinol (DMQH2). In Idiomarina loihiensis (strain ATCC BAA-735 / DSM 15497 / L2-TR), this protein is Ubiquinone/menaquinone biosynthesis C-methyltransferase UbiE.